The chain runs to 424 residues: Putative chloroquine resistance transporter (424 aa).

Topologically, residues 1–56 are cytoplasmic; sequence MTVIKKGKNKKKNLKNDDRYKELDSLITNGSEIGDNSGRSCIKRFFKIIGNEMKNN. A helical membrane pass occupies residues 57 to 77; it reads VYVYFLSILYLCVCVMNKVFA. The Vacuolar segment spans residues 78 to 88; that stretch reads KRTLNKMGNYS. Residue N86 is glycosylated (N-linked (GlcNAc...) asparagine). A helical membrane pass occupies residues 89 to 109; it reads FVTSETHNIICIVVFQLLYFI. Residues 110-125 lie on the Cytoplasmic side of the membrane; that stretch reads YRKTSTSGYKNESQKN. The helical transmembrane segment at 126–146 threads the bilayer; it reads FGWQFFLISLLDASTVIISMI. Residues 147 to 156 are Vacuolar-facing; the sequence is GLTRTTGNIQ. The chain crosses the membrane as a helical span at residues 157 to 177; that stretch reads SFIMQLIIPVNMYFCFMFLGY. Residues 178-180 lie on the Cytoplasmic side of the membrane; that stretch reads RYH. A helical membrane pass occupies residues 181–201; sequence LFNYLGAFIILITIAVVETFL. Residues 202 to 209 lie on the Vacuolar side of the membrane; the sequence is SFETQSEN. The chain crosses the membrane as a helical span at residues 210–230; it reads SIIFNLIMISALIPLSFSNMT. At 231–248 the chain is on the cytoplasmic side; sequence REVVFKKHKINILRLNAM. A helical membrane pass occupies residues 249 to 269; that stretch reads VVLFQFFTSLLVLPVYNIPFL. Residues 270–317 are Vacuolar-facing; sequence KEIYMPFSEMSTNINNGLRCLFYGQNTVVENCGVGMVKMCDNCEGAWK. 2 cysteine pairs are disulfide-bonded: C289/C312 and C301/C309. Residues 318-338 form a helical membrane-spanning segment; that stretch reads TFITFSFFNICDNLLACYIID. Topologically, residues 339-346 are cytoplasmic; it reads KFSTMTYT. A helical membrane pass occupies residues 347-367; sequence IVSCIQGPAITIAYYFKFLAG. Residues 368 to 377 are Vacuolar-facing; that stretch reads DAVRKPRILD. A helical membrane pass occupies residues 378–398; that stretch reads FLTLFGYLFGTIIYRIGNIIL. Topologically, residues 399–424 are cytoplasmic; that stretch reads EKKKMVKSQNSNDSEAELTCIETSTA.

Belongs to the CRT-like transporter family.

It is found in the vacuole membrane. Nutrient transporter. Involved in maintaining the osmotic homeostasis of the digestive vacuole. This is Putative chloroquine resistance transporter from Plasmodium yoelii yoelii.